Reading from the N-terminus, the 116-residue chain is MDPLIQELTKEQLRDDMPDFRAGDTVRVHVRVVEGTHERIQMFEGVVIKRKGAGISATYTVRKMSSGIGVERTFPVNDPRVAKVEVLRHGRVRRAKLYYLRERHGKAARIAEKRRG.

The protein belongs to the bacterial ribosomal protein bL19 family.

In terms of biological role, this protein is located at the 30S-50S ribosomal subunit interface and may play a role in the structure and function of the aminoacyl-tRNA binding site. In Lactobacillus gasseri (strain ATCC 33323 / DSM 20243 / BCRC 14619 / CIP 102991 / JCM 1131 / KCTC 3163 / NCIMB 11718 / NCTC 13722 / AM63), this protein is Large ribosomal subunit protein bL19.